Reading from the N-terminus, the 868-residue chain is Protein NIP100 (868 aa).

A CAP-Gly domain is found at 34–84 (GETQFAKGIWYGIELDKPLGKNDGSANGIRYFDIDLKKANSNGGYYGLFCK). Coiled coils occupy residues 101-175 (LNGN…HLDN), 207-375 (LDQT…QEEL), and 645-776 (SLLS…QIKE).

As to quaternary structure, component of the dynactin complex composed of at least ARP1, JNM1, NIP100 and ARP10. Dynactin comprises a short rod of the ARP1 filament attached to ARP10 at its pointed-end and probably associated with the capping protein at its barbed-end. The rod is implicated in dynein cargo binding. A sidearm formed by NIP100 projects from the ARP1 filament and is implicated in motor binding.

The protein resides in the cytoplasm. It localises to the cytoskeleton. It is found in the spindle pole. Its function is as follows. Motor-binding component of the dynactin complex which assists cytoplasmic dynein by increasing its processivity and by regulation of its cargo binding. The dynactin complex is required for the spindle translocation late in anaphase and is involved in a cell wall synthesis checkpoint. This is Protein NIP100 (NIP100) from Saccharomyces cerevisiae (strain ATCC 204508 / S288c) (Baker's yeast).